The sequence spans 435 residues: GTPase Obg (435 aa).

Positions 1 to 159 constitute an Obg domain; it reads MAFIDKCKIV…IEVVLELKTI (159 aa). One can recognise an OBG-type G domain in the interval 160–329; it reads ADIGIIGLPN…MLDDVIKIYF (170 aa). GTP is bound by residues 166-173, 191-195, 212-215, 282-285, and 310-312; these read GLPNAGKS, FTTLN, DIPG, NKID, and SAL. Ser-173 and Thr-193 together coordinate Mg(2+). An OCT domain is found at 355–435; sequence TPKNKELDKT…IYDITLEFEE (81 aa).

This sequence belongs to the TRAFAC class OBG-HflX-like GTPase superfamily. OBG GTPase family. As to quaternary structure, monomer. Mg(2+) is required as a cofactor.

The protein resides in the cytoplasm. Its function is as follows. An essential GTPase which binds GTP, GDP and possibly (p)ppGpp with moderate affinity, with high nucleotide exchange rates and a fairly low GTP hydrolysis rate. Plays a role in control of the cell cycle, stress response, ribosome biogenesis and in those bacteria that undergo differentiation, in morphogenesis control. In Ureaplasma urealyticum serovar 10 (strain ATCC 33699 / Western), this protein is GTPase Obg.